A 277-amino-acid polypeptide reads, in one-letter code: Proteasome subunit beta type-7 (277 aa).

A propeptide spans M1–G43 (removed in mature form). T44 functions as the Nucleophile in the catalytic mechanism.

The protein belongs to the peptidase T1B family. The 26S proteasome consists of a 20S proteasome core and two 19S regulatory subunits. The 20S proteasome core is a barrel-shaped complex made of 28 subunits that are arranged in four stacked rings. The two outer rings are each formed by seven alpha subunits, and the two inner rings are formed by seven beta subunits. The proteolytic activity is exerted by three beta-subunits PSMB5, PSMB6 and PSMB7.

It localises to the cytoplasm. Its subcellular location is the nucleus. It carries out the reaction Cleavage of peptide bonds with very broad specificity.. Component of the 20S core proteasome complex involved in the proteolytic degradation of most intracellular proteins. This complex plays numerous essential roles within the cell by associating with different regulatory particles. Associated with two 19S regulatory particles, forms the 26S proteasome and thus participates in the ATP-dependent degradation of ubiquitinated proteins. The 26S proteasome plays a key role in the maintenance of protein homeostasis by removing misfolded or damaged proteins that could impair cellular functions, and by removing proteins whose functions are no longer required. Associated with the PA200 or PA28, the 20S proteasome mediates ubiquitin-independent protein degradation. This type of proteolysis is required in several pathways including spermatogenesis (20S-PA200 complex) or generation of a subset of MHC class I-presented antigenic peptides (20S-PA28 complex). Within the 20S core complex, PSMB7 displays a trypsin-like activity. The protein is Proteasome subunit beta type-7 (PSMB7) of Bos taurus (Bovine).